We begin with the raw amino-acid sequence, 82 residues long: Opistoporin-1 (82 aa).

The signal sequence occupies residues 1–22 (MNRKLLFVTLMVTMLVMQPSEG). A propeptide spanning residues 67–82 (EAGQMPFDEFMDILYE) is cleaved from the precursor.

In terms of tissue distribution, expressed by the venom gland.

Its subcellular location is the secreted. The protein localises to the target cell membrane. At high concentrations, acts as a pore former in cellular membranes and causes the leakage of the cells. At submicromolar concentrations, degranulates granulocytes and has a weak hemolytic activity against human erythrocytes. Also strongly inhibits the production of superoxide anions. Has a strong antibacterial activity against Gram-negative bacteria but is less active against Gram-positive bacteria. Also has antifungal activity. The polypeptide is Opistoporin-1 (Opistophthalmus carinatus (African yellow leg scorpion)).